A 218-amino-acid chain; its full sequence is 3-dehydroquinate dehydratase (218 aa).

Residues 29–31 (EFR) and arginine 56 contribute to the 3-dehydroquinate site. The active-site Proton donor/acceptor is the histidine 116. Lysine 142 acts as the Schiff-base intermediate with substrate in catalysis. Residues arginine 180, serine 200, and glutamine 204 each coordinate 3-dehydroquinate.

Belongs to the type-I 3-dehydroquinase family. Homodimer.

The enzyme catalyses 3-dehydroquinate = 3-dehydroshikimate + H2O. The protein operates within metabolic intermediate biosynthesis; chorismate biosynthesis; chorismate from D-erythrose 4-phosphate and phosphoenolpyruvate: step 3/7. In terms of biological role, involved in the third step of the chorismate pathway, which leads to the biosynthesis of aromatic amino acids. Catalyzes the cis-dehydration of 3-dehydroquinate (DHQ) and introduces the first double bond of the aromatic ring to yield 3-dehydroshikimate. This Methanococcus maripaludis (strain DSM 14266 / JCM 13030 / NBRC 101832 / S2 / LL) protein is 3-dehydroquinate dehydratase.